A 131-amino-acid polypeptide reads, in one-letter code: Large ribosomal subunit protein bL12c (131 aa).

This sequence belongs to the bacterial ribosomal protein bL12 family. As to quaternary structure, homodimer. Part of the ribosomal stalk of the 50S ribosomal subunit. Forms a multimeric L10(L12)X complex, where L10 forms an elongated spine to which 2 to 4 L12 dimers bind in a sequential fashion. Binds GTP-bound translation factors.

It is found in the plastid. The protein localises to the chloroplast. Functionally, forms part of the ribosomal stalk which helps the ribosome interact with GTP-bound translation factors. Is thus essential for accurate translation. The polypeptide is Large ribosomal subunit protein bL12c (Euglena gracilis).